The primary structure comprises 694 residues: Prolyl 3-hydroxylase 2 (694 aa).

The signal sequence occupies residues 1-23 (MAPGSRSWGAVLLLAAMLPAACG). TPR repeat units lie at residues 35–68 (FDALYASGVEAYYGGDFAGAARCLEQALRSRREL), 136–169 (RVPYSYLQRAYIQLNKLEEAANAAHTFFMANPEH), 196–229 (HMEDYSAGVRHYDKEEYGLAITFLERALEGYYAE), and 292–325 (PLHYDYLQFAYYRVGDYVKALECARSYLLFHPDD). Positions 386–418 (KRYGARQDEHSVPSSISSEPEDGPRLSLTKKPT) form a coiled coil. Residues 395-427 (HSVPSSISSEPEDGPRLSLTKKPTPKPDRELKE) form a disordered region. N-linked (GlcNAc...) asparagine glycosylation is found at N446 and N535. Residues 543–657 (THLVCRTALS…RCAVALWFTL (115 aa)) form the Fe2OG dioxygenase domain. Residues H566, D568, and H638 each contribute to the Fe cation site. R648 is a catalytic residue. The short motif at 691-694 (KDEL) is the Prevents secretion from ER element.

It belongs to the leprecan family. The cofactor is Fe cation. L-ascorbate is required as a cofactor.

Its subcellular location is the endoplasmic reticulum. It is found in the sarcoplasmic reticulum. The protein resides in the golgi apparatus. It catalyses the reaction L-prolyl-[collagen] + 2-oxoglutarate + O2 = trans-3-hydroxy-L-prolyl-[collagen] + succinate + CO2. In terms of biological role, prolyl 3-hydroxylase that catalyzes the post-translational formation of 3-hydroxyproline on collagens. Contributes to proline 3-hydroxylation of collagen COL4A1 and COL1A1 in tendons, the eye sclera and in the eye lens capsule. Has high activity with the type IV collagen COL4A1, and lower activity with COL1A1. Catalyzes hydroxylation of the first Pro in Gly-Pro-Hyp sequences where Hyp is 4-hydroxyproline. Has no activity on substrates that lack 4-hydroxyproline in the third position. The polypeptide is Prolyl 3-hydroxylase 2 (Gallus gallus (Chicken)).